A 704-amino-acid polypeptide reads, in one-letter code: Ion-translocating oxidoreductase complex subunit C (704 aa).

4Fe-4S ferredoxin-type domains lie at Met368–Tyr397 and Lys407–Phe436. [4Fe-4S] cluster contacts are provided by Cys377, Cys380, Cys383, Cys387, Cys416, Cys419, Cys422, and Cys426. The disordered stretch occupies residues Arg536–Ala684. Positions Lys556–Arg565 are enriched in low complexity.

The protein belongs to the 4Fe4S bacterial-type ferredoxin family. RnfC subfamily. In terms of assembly, the complex is composed of six subunits: RsxA, RsxB, RsxC, RsxD, RsxE and RsxG. [4Fe-4S] cluster is required as a cofactor.

It is found in the cell inner membrane. Part of a membrane-bound complex that couples electron transfer with translocation of ions across the membrane. Required to maintain the reduced state of SoxR. This is Ion-translocating oxidoreductase complex subunit C from Salmonella choleraesuis (strain SC-B67).